Reading from the N-terminus, the 231-residue chain is Putative N-acetylmannosamine-6-phosphate 2-epimerase (231 aa).

Belongs to the NanE family.

The catalysed reaction is an N-acyl-D-glucosamine 6-phosphate = an N-acyl-D-mannosamine 6-phosphate. Its pathway is amino-sugar metabolism; N-acetylneuraminate degradation; D-fructose 6-phosphate from N-acetylneuraminate: step 3/5. Functionally, converts N-acetylmannosamine-6-phosphate (ManNAc-6-P) to N-acetylglucosamine-6-phosphate (GlcNAc-6-P). The sequence is that of Putative N-acetylmannosamine-6-phosphate 2-epimerase from Latilactobacillus sakei subsp. sakei (strain 23K) (Lactobacillus sakei subsp. sakei).